The sequence spans 332 residues: MTLRQTLEQQWQDGGALATALRPLGALTGKVARWRRRHIQGRAASIPTIVVGNLGVGGSGKTPLVAALARQLTVAGWRVAIVSRGYGARPPHWPYRVQRDDSPQQAGDEPLLLAQEQGQTQAVYLCPDRHRAIAAAAADGYNLALLDDGFQHLALQPSLRLLVLSGPRPLGNGHCLPAGPLRECPDAMLHADALLMDAAAAAAIPERNGPPRFLFRIQPKDLVAVNDPCRSRSLDSLQGQHVTAVTGIARPQRFVASLEGLGAIPDPRFFPDHHSFCASDIAHLPRPLVMTAKDAVKCREFAQADDWTLRIEAELEASSQPWLEQSLLPWRS.

55–62 (GVGGSGKT) provides a ligand contact to ATP.

Belongs to the LpxK family.

The enzyme catalyses a lipid A disaccharide + ATP = a lipid IVA + ADP + H(+). Its pathway is glycolipid biosynthesis; lipid IV(A) biosynthesis; lipid IV(A) from (3R)-3-hydroxytetradecanoyl-[acyl-carrier-protein] and UDP-N-acetyl-alpha-D-glucosamine: step 6/6. In terms of biological role, transfers the gamma-phosphate of ATP to the 4'-position of a tetraacyldisaccharide 1-phosphate intermediate (termed DS-1-P) to form tetraacyldisaccharide 1,4'-bis-phosphate (lipid IVA). The protein is Tetraacyldisaccharide 4'-kinase of Acidithiobacillus ferrooxidans (strain ATCC 53993 / BNL-5-31) (Leptospirillum ferrooxidans (ATCC 53993)).